Here is a 445-residue protein sequence, read N- to C-terminus: Fibrinogen gamma chain (445 aa).

The N-terminal stretch at 1-25 is a signal peptide; the sequence is MNWSLQLRSFILCWALLLLSPTGLA. Asparagine 78 is a glycosylation site (N-linked (GlcNAc...) asparagine). One can recognise a Fibrinogen C-terminal domain in the interval 170-416; it reads RIHDTTGKDC…ETTMKIIPFN (247 aa). A disulfide bridge links cysteine 179 with cysteine 208. Aspartate 344, aspartate 346, and glycine 350 together coordinate Ca(2+). A disulfide bridge connects residues cysteine 352 and cysteine 365. The segment at 400 to 422 is gamma-chain polymerization, binding amino end of another fibrin alpha chain; sequence TRWYSMKETTMKIIPFNRLSIGD. Residue glutamine 424 forms an Isoglutamyl lysine isopeptide (Gln-Lys) (interchain with K-432) linkage. The disordered stretch occupies residues 424–445; it reads QQHHMGGSKQVSVEHEVDVEYP. Residue serine 431 is modified to Phosphoserine. Residue lysine 432 forms an Isoglutamyl lysine isopeptide (Lys-Gln) (interchain with Q-424) linkage. The segment covering 435–445 has biased composition (basic and acidic residues); it reads SVEHEVDVEYP.

Heterohexamer; disulfide linked. Contains 2 sets of 3 non-identical chains (alpha, beta and gamma). The 2 heterotrimers are in head to head conformation with the N-termini in a small central domain. Conversion of fibrinogen to fibrin is triggered by thrombin, which cleaves fibrinopeptides A and B from alpha and beta chains, and thus exposes the N-terminal polymerization sites responsible for the formation of the soft clot. The soft clot is converted into the hard clot by factor XIIIA which catalyzes the epsilon-(gamma-glutamyl)lysine cross-linking between gamma chains (stronger) and between alpha chains (weaker) of different monomers.

It is found in the secreted. In terms of biological role, together with fibrinogen alpha (FGA) and fibrinogen beta (FGB), polymerizes to form an insoluble fibrin matrix. Has a major function in hemostasis as one of the primary components of blood clots. In addition, functions during the early stages of wound repair to stabilize the lesion and guide cell migration during re-epithelialization. Was originally thought to be essential for platelet aggregation, based on in vitro studies using anticoagulated blood. However, subsequent studies have shown that it is not absolutely required for thrombus formation in vivo. Enhances expression of SELP in activated platelets via an ITGB3-dependent pathway. Maternal fibrinogen is essential for successful pregnancy. Fibrin deposition is also associated with infection, where it protects against IFNG-mediated hemorrhage. May also facilitate the antibacterial immune response via both innate and T-cell mediated pathways. This is Fibrinogen gamma chain (Fgg) from Rattus norvegicus (Rat).